The following is a 475-amino-acid chain: Aspartyl/glutamyl-tRNA(Asn/Gln) amidotransferase subunit B (475 aa).

This sequence belongs to the GatB/GatE family. GatB subfamily. As to quaternary structure, heterotrimer of A, B and C subunits.

It carries out the reaction L-glutamyl-tRNA(Gln) + L-glutamine + ATP + H2O = L-glutaminyl-tRNA(Gln) + L-glutamate + ADP + phosphate + H(+). It catalyses the reaction L-aspartyl-tRNA(Asn) + L-glutamine + ATP + H2O = L-asparaginyl-tRNA(Asn) + L-glutamate + ADP + phosphate + 2 H(+). Its function is as follows. Allows the formation of correctly charged Asn-tRNA(Asn) or Gln-tRNA(Gln) through the transamidation of misacylated Asp-tRNA(Asn) or Glu-tRNA(Gln) in organisms which lack either or both of asparaginyl-tRNA or glutaminyl-tRNA synthetases. The reaction takes place in the presence of glutamine and ATP through an activated phospho-Asp-tRNA(Asn) or phospho-Glu-tRNA(Gln). The chain is Aspartyl/glutamyl-tRNA(Asn/Gln) amidotransferase subunit B from Clostridium novyi (strain NT).